A 285-amino-acid chain; its full sequence is Small ribosomal subunit protein uS2 (285 aa).

A disordered region spans residues 229–285; the sequence is RHNGKSNAAEEPMAEWERELLEQHEEQKSQDAAPAEQSAPAAEAPAETEQKDAPAAE. Residues 243 to 257 show a composition bias toward basic and acidic residues; sequence EWERELLEQHEEQKS. A compositionally biased stretch (low complexity) spans 260–275; sequence AAPAEQSAPAAEAPAE. A compositionally biased stretch (basic and acidic residues) spans 276 to 285; the sequence is TEQKDAPAAE.

It belongs to the universal ribosomal protein uS2 family.

In Kocuria rhizophila (strain ATCC 9341 / DSM 348 / NBRC 103217 / DC2201), this protein is Small ribosomal subunit protein uS2.